The following is a 323-amino-acid chain: MGMEGLLQNSTNFVLTGLITHPAFPGLLFAVVFSIFVVAITANLVMILLIHMDSRLHTPMYFLLSQLSIMDTIYICITVPKMLQDLLSKDKTISFLGCAVQIFYLTLIGGEFFLLGLMAYDRYVAVCNPLRYPLLMNRRVCLFMVVGSWVGGSLDGFMLTPVTMSFPFCRSREINHFFCEIPAVLKLSCTDTSLYETLMYACCVLMLLIPLSVISVSYTHILLTVHRMNSAEGRRKAFATCSSHIMVVSVFYGAAFYTNVLPHSYHTPEKDKVVSAFYTILTPMLNPLIYSLRNKDVAAALRKVLGRCGSSQSIRVATVIRKG.

Residues 1–26 are Extracellular-facing; sequence MGMEGLLQNSTNFVLTGLITHPAFPG. Residue Asn-9 is glycosylated (N-linked (GlcNAc...) asparagine). The chain crosses the membrane as a helical span at residues 27-50; that stretch reads LLFAVVFSIFVVAITANLVMILLI. The Cytoplasmic segment spans residues 51-58; that stretch reads HMDSRLHT. The helical transmembrane segment at 59-80 threads the bilayer; that stretch reads PMYFLLSQLSIMDTIYICITVP. Residues 81-101 lie on the Extracellular side of the membrane; it reads KMLQDLLSKDKTISFLGCAVQ. A disulfide bond links Cys-98 and Cys-189. The chain crosses the membrane as a helical span at residues 102–120; sequence IFYLTLIGGEFFLLGLMAY. The Cytoplasmic portion of the chain corresponds to 121-139; it reads DRYVAVCNPLRYPLLMNRR. The helical transmembrane segment at 140-158 threads the bilayer; it reads VCLFMVVGSWVGGSLDGFM. Residues 159-195 are Extracellular-facing; it reads LTPVTMSFPFCRSREINHFFCEIPAVLKLSCTDTSLY. A helical membrane pass occupies residues 196-219; that stretch reads ETLMYACCVLMLLIPLSVISVSYT. The Cytoplasmic portion of the chain corresponds to 220–236; the sequence is HILLTVHRMNSAEGRRK. The chain crosses the membrane as a helical span at residues 237–259; that stretch reads AFATCSSHIMVVSVFYGAAFYTN. Topologically, residues 260–272 are extracellular; sequence VLPHSYHTPEKDK. Residues 273-292 form a helical membrane-spanning segment; that stretch reads VVSAFYTILTPMLNPLIYSL. Over 293-323 the chain is Cytoplasmic; sequence RNKDVAAALRKVLGRCGSSQSIRVATVIRKG.

It belongs to the G-protein coupled receptor 1 family.

The protein localises to the cell membrane. In terms of biological role, odorant receptor. In Homo sapiens (Human), this protein is Olfactory receptor 2T35 (OR2T35).